The chain runs to 72 residues: Cell division protein ZapB (72 aa).

Positions 5–71 (ILDQLEEKIK…LRSLLGQIDN (67 aa)) form a coiled coil.

It belongs to the ZapB family. Homodimer. The ends of the coiled-coil dimer bind to each other, forming polymers. Interacts with FtsZ.

Its subcellular location is the cytoplasm. Non-essential, abundant cell division factor that is required for proper Z-ring formation. It is recruited early to the divisome by direct interaction with FtsZ, stimulating Z-ring assembly and thereby promoting cell division earlier in the cell cycle. Its recruitment to the Z-ring requires functional FtsA or ZipA. The protein is Cell division protein ZapB of Actinobacillus pleuropneumoniae serotype 5b (strain L20).